A 274-amino-acid chain; its full sequence is 2,3,4,5-tetrahydropyridine-2,6-dicarboxylate N-succinyltransferase (274 aa).

Residues arginine 104 and aspartate 141 each contribute to the substrate site.

This sequence belongs to the transferase hexapeptide repeat family. In terms of assembly, homotrimer.

The protein localises to the cytoplasm. The enzyme catalyses (S)-2,3,4,5-tetrahydrodipicolinate + succinyl-CoA + H2O = (S)-2-succinylamino-6-oxoheptanedioate + CoA. Its pathway is amino-acid biosynthesis; L-lysine biosynthesis via DAP pathway; LL-2,6-diaminopimelate from (S)-tetrahydrodipicolinate (succinylase route): step 1/3. In Shewanella oneidensis (strain ATCC 700550 / JCM 31522 / CIP 106686 / LMG 19005 / NCIMB 14063 / MR-1), this protein is 2,3,4,5-tetrahydropyridine-2,6-dicarboxylate N-succinyltransferase.